Reading from the N-terminus, the 177-residue chain is NAD(P)H-quinone oxidoreductase subunit 6, chloroplastic (177 aa).

Transmembrane regions (helical) follow at residues 10-30 (ILLV…VLLT), 32-52 (PIYS…FYIP), 61-81 (AQLL…VMFM), 92-112 (FWTV…FSLI), and 152-172 (FYLP…GAIA).

The protein belongs to the complex I subunit 6 family. NDH is composed of at least 16 different subunits, 5 of which are encoded in the nucleus.

The protein resides in the plastid. The protein localises to the chloroplast thylakoid membrane. It carries out the reaction a plastoquinone + NADH + (n+1) H(+)(in) = a plastoquinol + NAD(+) + n H(+)(out). The catalysed reaction is a plastoquinone + NADPH + (n+1) H(+)(in) = a plastoquinol + NADP(+) + n H(+)(out). Its function is as follows. NDH shuttles electrons from NAD(P)H:plastoquinone, via FMN and iron-sulfur (Fe-S) centers, to quinones in the photosynthetic chain and possibly in a chloroplast respiratory chain. The immediate electron acceptor for the enzyme in this species is believed to be plastoquinone. Couples the redox reaction to proton translocation, and thus conserves the redox energy in a proton gradient. The polypeptide is NAD(P)H-quinone oxidoreductase subunit 6, chloroplastic (ndhG) (Nymphaea alba (White water-lily)).